A 288-amino-acid polypeptide reads, in one-letter code: Quinate/shikimate dehydrogenase (288 aa).

2 residues coordinate substrate: K71 and D107. NAD(+)-binding positions include 132–135 (AGGA), 155–158 (NRRD), K205, 232–235 (CVYN), and G255.

The protein belongs to the shikimate dehydrogenase family. As to quaternary structure, homodimer.

It catalyses the reaction L-quinate + NAD(+) = 3-dehydroquinate + NADH + H(+). It carries out the reaction L-quinate + NADP(+) = 3-dehydroquinate + NADPH + H(+). The enzyme catalyses shikimate + NADP(+) = 3-dehydroshikimate + NADPH + H(+). The catalysed reaction is shikimate + NAD(+) = 3-dehydroshikimate + NADH + H(+). It participates in metabolic intermediate biosynthesis; chorismate biosynthesis; chorismate from D-erythrose 4-phosphate and phosphoenolpyruvate: step 4/7. Its function is as follows. The actual biological function of YdiB remains unclear, nor is it known whether 3-dehydroshikimate or quinate represents the natural substrate. Catalyzes the reversible NAD-dependent reduction of both 3-dehydroshikimate (DHSA) and 3-dehydroquinate to yield shikimate (SA) and quinate, respectively. It can use both NAD or NADP for catalysis, however it has higher catalytic efficiency with NAD. This chain is Quinate/shikimate dehydrogenase, found in Escherichia coli O81 (strain ED1a).